Here is a 594-residue protein sequence, read N- to C-terminus: Capsid vertex component 1 (594 aa).

4 disordered regions span residues 52 to 77 (GRST…DAVG), 176 to 205 (NKRD…NGSD), 443 to 468 (ARRQ…SGPP), and 575 to 594 (GRQE…FDDL). Over residues 61-76 (GDEDDAPASDDAEDAV) the composition is skewed to acidic residues.

This sequence belongs to the herpesviridae CVC1 protein family. In terms of assembly, interacts (via C-terminus) with capsid vertex component 2/CVC2.

The protein localises to the virion. The protein resides in the host nucleus. Capsid vertex-specific component that plays a role during viral DNA encapsidation, assuring correct genome cleavage and presumably stabilizing capsids that contain full-length viral genomes. In Homo sapiens (Human), this protein is Capsid vertex component 1.